The following is a 331-amino-acid chain: Adenosine deaminase (331 aa).

2 residues coordinate Zn(2+): H12 and H14. Substrate is bound by residues H14, D16, and G170. Residue H197 coordinates Zn(2+). E200 functions as the Proton donor in the catalytic mechanism. D278 serves as a coordination point for Zn(2+).

Belongs to the metallo-dependent hydrolases superfamily. Adenosine and AMP deaminases family. Adenosine deaminase subfamily. It depends on Zn(2+) as a cofactor.

The catalysed reaction is adenosine + H2O + H(+) = inosine + NH4(+). It carries out the reaction 2'-deoxyadenosine + H2O + H(+) = 2'-deoxyinosine + NH4(+). Catalyzes the hydrolytic deamination of adenosine and 2-deoxyadenosine. The polypeptide is Adenosine deaminase (Shewanella woodyi (strain ATCC 51908 / MS32)).